The chain runs to 263 residues: 5'-nucleotidase SurE (263 aa).

Residues D8, D9, S40, and N93 each contribute to the a divalent metal cation site.

This sequence belongs to the SurE nucleotidase family. Requires a divalent metal cation as cofactor.

The protein localises to the cytoplasm. It catalyses the reaction a ribonucleoside 5'-phosphate + H2O = a ribonucleoside + phosphate. In terms of biological role, nucleotidase that shows phosphatase activity on nucleoside 5'-monophosphates. The polypeptide is 5'-nucleotidase SurE (Caulobacter vibrioides (strain ATCC 19089 / CIP 103742 / CB 15) (Caulobacter crescentus)).